Reading from the N-terminus, the 161-residue chain is Probable ribosome biogenesis protein RLP24 (161 aa).

Belongs to the eukaryotic ribosomal protein eL24 family. As to quaternary structure, associated with nucleolar and cytoplasmic pre-60S particles. At the end of biogenesis it dissociates from cytoplasmic pre-60S particles and is likely to be exchanged for its ribosomal homolog, RPL24.

Its subcellular location is the nucleus. The protein localises to the nucleolus. Functionally, involved in the biogenesis of the 60S ribosomal subunit. Ensures the docking of GTPBP4/NOG1 to pre-60S particles. This Danio rerio (Zebrafish) protein is Probable ribosome biogenesis protein RLP24 (rsl24d1).